Consider the following 452-residue polypeptide: Probable hexaprenyl pyrophosphate synthase, mitochondrial (452 aa).

Positions 108, 111, and 204 each coordinate isopentenyl diphosphate. The Mg(2+) site is built by aspartate 211 and aspartate 215. An an all-trans-polyprenyl diphosphate-binding site is contributed by arginine 220. Residue arginine 221 participates in isopentenyl diphosphate binding. Residues lysine 303, threonine 304, glutamine 341, and lysine 358 each contribute to the an all-trans-polyprenyl diphosphate site.

It belongs to the FPP/GGPP synthase family. Mg(2+) is required as a cofactor.

The protein localises to the mitochondrion. It functions in the pathway cofactor biosynthesis; ubiquinone biosynthesis. Functionally, assembly of polyisoprenoid side chains. The polyprenyl synthase of coenzyme Q biosynthesis catalyzes the formation from isopentenyl diphosphate of all trans-polyprenyl pyrophosphates generally ranging in length of between 6 and 10 isoprene units depending on the species. The sequence is that of Probable hexaprenyl pyrophosphate synthase, mitochondrial (COQ1) from Yarrowia lipolytica (strain CLIB 122 / E 150) (Yeast).